The sequence spans 872 residues: Chaperone protein ClpB 2 (872 aa).

The Clp R domain occupies 6–148; sequence PNQFTEKAWE…KNIIKQVRGS (143 aa). 2 repeat regions span residues 9-73 and 85-148; these read FTEK…IQRQ and LGRS…VRGS. The tract at residues 161–342 is NBD1; it reads QSLEKYGRDL…RRFQQVYVDQ (182 aa). 208 to 215 is a binding site for ATP; it reads GEPGVGKT. Positions 343–551 are linker; that stretch reads PSVEDTISIL…IAEIISKWTG (209 aa). The stretch at 393–527 forms a coiled coil; sequence IDLVDEAAAR…TERELSQTQG (135 aa). An NBD2 region spans residues 561–772; it reads EKEKLLHLED…RIDEVIIFHS (212 aa). 611–618 is an ATP binding site; it reads GPTGVGKT. A C-terminal region spans residues 773–872; sequence LDKKELRQIV…SRLPVEVFSS (100 aa).

It belongs to the ClpA/ClpB family. In terms of assembly, homohexamer. The oligomerization is ATP-dependent.

The protein resides in the cytoplasm. In terms of biological role, part of a stress-induced multi-chaperone system, it is involved in the recovery of the cell from heat-induced damage, in cooperation with DnaK, DnaJ and GrpE. Acts before DnaK, in the processing of protein aggregates. Protein binding stimulates the ATPase activity; ATP hydrolysis unfolds the denatured protein aggregates, which probably helps expose new hydrophobic binding sites on the surface of ClpB-bound aggregates, contributing to the solubilization and refolding of denatured protein aggregates by DnaK. The chain is Chaperone protein ClpB 2 (clpB2) from Nostoc sp. (strain PCC 7120 / SAG 25.82 / UTEX 2576).